The chain runs to 304 residues: UDP-3-O-acyl-N-acetylglucosamine deacetylase (304 aa).

His-79, His-238, and Asp-242 together coordinate Zn(2+). The active-site Proton donor is the His-265.

The protein belongs to the LpxC family. It depends on Zn(2+) as a cofactor.

The catalysed reaction is a UDP-3-O-[(3R)-3-hydroxyacyl]-N-acetyl-alpha-D-glucosamine + H2O = a UDP-3-O-[(3R)-3-hydroxyacyl]-alpha-D-glucosamine + acetate. It functions in the pathway glycolipid biosynthesis; lipid IV(A) biosynthesis; lipid IV(A) from (3R)-3-hydroxytetradecanoyl-[acyl-carrier-protein] and UDP-N-acetyl-alpha-D-glucosamine: step 2/6. Catalyzes the hydrolysis of UDP-3-O-myristoyl-N-acetylglucosamine to form UDP-3-O-myristoylglucosamine and acetate, the committed step in lipid A biosynthesis. The chain is UDP-3-O-acyl-N-acetylglucosamine deacetylase from Chromobacterium violaceum (strain ATCC 12472 / DSM 30191 / JCM 1249 / CCUG 213 / NBRC 12614 / NCIMB 9131 / NCTC 9757 / MK).